We begin with the raw amino-acid sequence, 664 residues long: tRNA (carboxymethyluridine(34)-5-O)-methyltransferase ALKBH8 (664 aa).

The region spanning 43-120 is the RRM domain; the sequence is QSLVVANGGL…QKIILYLNFV (78 aa). In terms of domain architecture, Fe2OG dioxygenase spans 220 to 337; that stretch reads KPDQMTINQY…RTSFTFRKVR (118 aa). Position 227-229 (227-229) interacts with 2-oxoglutarate; that stretch reads NQY. Residues His-238 and Asp-240 each coordinate Fe cation. His-242 serves as a coordination point for Zn(2+). His-292 provides a ligand contact to Fe cation. 2 residues coordinate 2-oxoglutarate: Arg-328 and Arg-334. Positions 341, 343, and 349 each coordinate Zn(2+). The methyltransferase domain stretch occupies residues 411–664; that stretch reads ADIGCGNGKY…GNWCVILQKA (254 aa). The tract at residues 516–575 is disordered; the sequence is KYLKGNRNSQGKKEEMNSDTSVQRSLVEQMPDMGSRDSASSVPRINDSQEGGCNSRQVSN. A compositionally biased stretch (polar residues) spans 552–575; sequence DSASSVPRINDSQEGGCNSRQVSN.

Belongs to the alkB family. Interacts with TRMT112. The cofactor is Fe(2+).

It is found in the cytoplasm. The protein localises to the nucleus. It catalyses the reaction 5-(carboxymethyl)uridine(34) in tRNA + S-adenosyl-L-methionine = 5-(2-methoxy-2-oxoethyl)uridine(34) in tRNA + S-adenosyl-L-homocysteine. In terms of biological role, catalyzes the methylation of 5-carboxymethyl uridine to 5-methylcarboxymethyl uridine at the wobble position of the anticodon loop in tRNA via its methyltransferase domain. Catalyzes the last step in the formation of 5-methylcarboxymethyl uridine at the wobble position of the anticodon loop in target tRNA. Has a preference for tRNA(Arg) and tRNA(Glu), and does not bind tRNA(Lys). Binds tRNA and catalyzes the iron and alpha-ketoglutarate dependent hydroxylation of 5-methylcarboxymethyl uridine at the wobble position of the anticodon loop in tRNA via its dioxygenase domain, giving rise to 5-(S)-methoxycarbonylhydroxymethyluridine; has a preference for tRNA(Gly). Required for normal survival after DNA damage. May inhibit apoptosis and promote cell survival and angiogenesis. This Macaca fascicularis (Crab-eating macaque) protein is tRNA (carboxymethyluridine(34)-5-O)-methyltransferase ALKBH8 (ALKBH8).